An 893-amino-acid polypeptide reads, in one-letter code: Pentatricopeptide repeat-containing protein At5g52850, chloroplastic (893 aa).

PPR repeat units follow at residues 57 to 87 (NLDLCNNLLSLYLKTDGIWNARKLFDEMSHR), 88 to 122 (TVFAWTVMISAFTKSQEFASALSLFEEMMASGTHP), 123 to 157 (NEFTFSSVVRSCAGLRDISYGGRVHGSVIKTGFEG), 158 to 188 (NSVVGSSLSDLYSKCGQFKEACELFSSLQNA), 189 to 223 (DTISWTMMISSLVGARKWREALQFYSEMVKAGVPP), 224 to 257 (NEFTFVKLLGASSFLGLEFGKTIHSNIIVRGIPL), 258 to 288 (NVVLKTSLVDFYSQFSKMEDAVRVLNSSGEQ), 289 to 323 (DVFLWTSVVSGFVRNLRAKEAVGTFLEMRSLGLQP), 324 to 358 (NNFTYSAILSLCSAVRSLDFGKQIHSQTIKVGFED), 359 to 390 (STDVGNALVDMYMKCSASEVEASRVFGAMVSP), 391 to 425 (NVVSWTTLILGLVDHGFVQDCFGLLMEMVKREVEP), 426 to 460 (NVVTLSGVLRACSKLRHVRRVLEIHAYLLRRHVDG), 461 to 491 (EMVVGNSLVDAYASSRKVDYAWNVIRSMKRR), 492 to 526 (DNITYTSLVTRFNELGKHEMALSVINYMYGDGIRM), 527 to 561 (DQLSLPGFISASANLGALETGKHLHCYSVKSGFSG), 562 to 592 (AASVLNSLVDMYSKCGSLEDAKKVFEEIATP), 593 to 627 (DVVSWNGLVSGLASNGFISSALSAFEEMRMKETEP), 628 to 658 (DSVTFLILLSACSNGRLTDLGLEYFQVMKKI), and 664 to 694 (QVEHYVHLVGILGRAGRLEEATGVVETMHLK). The interval 699–774 (IFKTLLRACR…KLGKSTVEVQ (76 aa)) is type E motif. Residues 775 to 806 (GKVHSFVSEDVTRVDKTNGIYAEIESIKEEIK) form a type E(+) motif region. Residues 807 to 893 (RFGSPYRGNE…SCKREETSFV (87 aa)) are type DYW motif.

This sequence belongs to the PPR family. PCMP-H subfamily.

Its subcellular location is the plastid. It localises to the chloroplast. This Arabidopsis thaliana (Mouse-ear cress) protein is Pentatricopeptide repeat-containing protein At5g52850, chloroplastic (PCMP-H31).